The sequence spans 464 residues: tRNA modification GTPase MnmE (464 aa).

(6S)-5-formyl-5,6,7,8-tetrahydrofolate contacts are provided by Arg28, Glu90, and Arg129. One can recognise a TrmE-type G domain in the interval 226 to 385; it reads GLATAIVGRP…LEEKIAELFF (160 aa). Position 236 (Asn236) interacts with K(+). Residues 236–241, 255–261, and 280–283 contribute to the GTP site; these read NVGKSS, TDIAGTT, and DTAG. Ser240 provides a ligand contact to Mg(2+). K(+) is bound by residues Thr255, Ile257, and Thr260. Thr261 is a Mg(2+) binding site. Residue Lys464 coordinates (6S)-5-formyl-5,6,7,8-tetrahydrofolate.

Belongs to the TRAFAC class TrmE-Era-EngA-EngB-Septin-like GTPase superfamily. TrmE GTPase family. In terms of assembly, homodimer. Heterotetramer of two MnmE and two MnmG subunits. The cofactor is K(+).

Its subcellular location is the cytoplasm. In terms of biological role, exhibits a very high intrinsic GTPase hydrolysis rate. Involved in the addition of a carboxymethylaminomethyl (cmnm) group at the wobble position (U34) of certain tRNAs, forming tRNA-cmnm(5)s(2)U34. This chain is tRNA modification GTPase MnmE, found in Ligilactobacillus salivarius (strain UCC118) (Lactobacillus salivarius).